Consider the following 122-residue polypeptide: Large ribosomal subunit protein uL18 (122 aa).

Belongs to the universal ribosomal protein uL18 family. Part of the 50S ribosomal subunit; part of the 5S rRNA/L5/L18/L25 subcomplex. Contacts the 5S and 23S rRNAs.

Functionally, this is one of the proteins that bind and probably mediate the attachment of the 5S RNA into the large ribosomal subunit, where it forms part of the central protuberance. This Hydrogenobaculum sp. (strain Y04AAS1) protein is Large ribosomal subunit protein uL18.